The sequence spans 194 residues: Protein GrpE (194 aa).

The span at 1 to 14 (MSKMNPNEKKENAS) shows a compositional bias: basic and acidic residues. A disordered region spans residues 1–48 (MSKMNPNEKKENASKNENVNNEEATNLQEEQSNAADEAAGSDNVSGEV). Over residues 24–34 (ATNLQEEQSNA) the composition is skewed to polar residues.

This sequence belongs to the GrpE family. Homodimer.

It localises to the cytoplasm. Functionally, participates actively in the response to hyperosmotic and heat shock by preventing the aggregation of stress-denatured proteins, in association with DnaK and GrpE. It is the nucleotide exchange factor for DnaK and may function as a thermosensor. Unfolded proteins bind initially to DnaJ; upon interaction with the DnaJ-bound protein, DnaK hydrolyzes its bound ATP, resulting in the formation of a stable complex. GrpE releases ADP from DnaK; ATP binding to DnaK triggers the release of the substrate protein, thus completing the reaction cycle. Several rounds of ATP-dependent interactions between DnaJ, DnaK and GrpE are required for fully efficient folding. This chain is Protein GrpE, found in Parabacteroides distasonis (strain ATCC 8503 / DSM 20701 / CIP 104284 / JCM 5825 / NCTC 11152).